Reading from the N-terminus, the 256-residue chain is Adenylate kinase (256 aa).

Residue 45–50 (GAGKGT) coordinates ATP. Positions 67-96 (ATGDLLRQQVAMGTDLGKQAKKIMDQGALV) are NMP. AMP contacts are provided by residues threonine 68, arginine 73, 94-96 (ALV), 123-126 (GFPR), and glutamine 130. Residues 164-201 (GRLIHPGSGRSYHKIFSPPKQPMKDDITGEPLVQRSDD) form an LID region. ATP contacts are provided by residues arginine 165 and 174 to 175 (SY). Positions 198 and 209 each coordinate AMP. Glutamine 237 contributes to the ATP binding site.

It belongs to the adenylate kinase family. AK2 subfamily. As to quaternary structure, monomer.

The protein localises to the cytoplasm. Its subcellular location is the cytosol. The protein resides in the mitochondrion intermembrane space. It carries out the reaction AMP + ATP = 2 ADP. In terms of biological role, catalyzes the reversible transfer of the terminal phosphate group between ATP and AMP. Plays an important role in cellular energy homeostasis and in adenine nucleotide metabolism. Adenylate kinase activity is critical for regulation of the phosphate utilization and the AMP de novo biosynthesis pathways. The sequence is that of Adenylate kinase from Malassezia globosa (strain ATCC MYA-4612 / CBS 7966) (Dandruff-associated fungus).